A 110-amino-acid polypeptide reads, in one-letter code: Vacuolar ATPase assembly integral membrane protein VMA21 (110 aa).

Residues 1–28 (MTTRRIIGQDGEEKTYLDVDPRGPPGPS) are disordered. Over 1–44 (MTTRRIIGQDGEEKTYLDVDPRGPPGPSNISPAVPASVIWKLMS) the chain is Cytoplasmic. Residues 11–21 (GEEKTYLDVDP) are compositionally biased toward basic and acidic residues. The helical transmembrane segment at 45–65 (FTFAMITLPIGTYFFTVNYVF) threads the bilayer. The Lumenal segment spans residues 66–71 (GGNATY). Residues 72–92 (AGALAAIMANVVLIAYVIMAF) form a helical membrane-spanning segment. Over 93-110 (KDDQAEQAEDAREAKKEL) the chain is Cytoplasmic. The short motif at 107-110 (KKEL) is the Prevents secretion from ER element.

This sequence belongs to the VMA21 family.

The protein localises to the endoplasmic reticulum membrane. The protein resides in the endoplasmic reticulum-Golgi intermediate compartment membrane. It is found in the cytoplasmic vesicle. It localises to the COPII-coated vesicle membrane. Functionally, required for the assembly of the V0 complex of the vacuolar ATPase (V-ATPase) in the endoplasmic reticulum. The sequence is that of Vacuolar ATPase assembly integral membrane protein VMA21 from Phaeosphaeria nodorum (strain SN15 / ATCC MYA-4574 / FGSC 10173) (Glume blotch fungus).